The following is a 197-amino-acid chain: Rac-like GTP-binding protein ARAC6 (197 aa).

G13–T20 is a binding site for GTP. An Effector region motif is present at residues Y35–F43. GTP contacts are provided by residues D60–Q64 and T118–D121. GDP is bound at residue S160. Cysteine methyl ester is present on C194. A lipid anchor (S-geranylgeranyl cysteine) is attached at C194. A propeptide spans S195 to L197 (removed in mature form).

It belongs to the small GTPase superfamily. Rho family. Interacts with SPK1. As to expression, ubiquitous. Preferentially expressed in mature pollen and pollen tubes.

Its subcellular location is the cytoplasm. It localises to the membrane. May be involved in cell polarity control during the actin-dependent tip growth of pollen tubes. In terms of biological role, inactive GDP-bound Rho GTPases reside in the cytosol, are found in a complex with Rho GDP-dissociation inhibitors (Rho GDIs), and are released from the GDI protein in order to translocate to membranes upon activation. This chain is Rac-like GTP-binding protein ARAC6 (ARAC6), found in Arabidopsis thaliana (Mouse-ear cress).